A 593-amino-acid chain; its full sequence is NADH-quinone oxidoreductase subunit C/D 1 (593 aa).

Residues 1-193 form an NADH dehydrogenase I subunit C region; that stretch reads MPWAKEGDLQ…DNLEGLMNYD (193 aa). Residues 217–593 are NADH dehydrogenase I subunit D; sequence AQIVLNWGPL…IDPVVGETDR (377 aa).

The protein in the N-terminal section; belongs to the complex I 30 kDa subunit family. This sequence in the C-terminal section; belongs to the complex I 49 kDa subunit family. In terms of assembly, NDH-1 is composed of 13 different subunits. Subunits NuoB, CD, E, F, and G constitute the peripheral sector of the complex.

The protein resides in the cell inner membrane. The catalysed reaction is a quinone + NADH + 5 H(+)(in) = a quinol + NAD(+) + 4 H(+)(out). Its function is as follows. NDH-1 shuttles electrons from NADH, via FMN and iron-sulfur (Fe-S) centers, to quinones in the respiratory chain. The immediate electron acceptor for the enzyme in this species is believed to be ubiquinone. Couples the redox reaction to proton translocation (for every two electrons transferred, four hydrogen ions are translocated across the cytoplasmic membrane), and thus conserves the redox energy in a proton gradient. This chain is NADH-quinone oxidoreductase subunit C/D 1 (nuoC1), found in Aquifex aeolicus (strain VF5).